The chain runs to 638 residues: 1-deoxy-D-xylulose-5-phosphate synthase (638 aa).

Residues His-81 and 122–124 contribute to the thiamine diphosphate site; that span reads GHS. Asp-153 is a Mg(2+) binding site. Thiamine diphosphate is bound by residues 154-155, Asn-182, Tyr-293, and Glu-377; that span reads GS. Asn-182 lines the Mg(2+) pocket.

This sequence belongs to the transketolase family. DXPS subfamily. As to quaternary structure, homodimer. Mg(2+) serves as cofactor. The cofactor is thiamine diphosphate.

The enzyme catalyses D-glyceraldehyde 3-phosphate + pyruvate + H(+) = 1-deoxy-D-xylulose 5-phosphate + CO2. Its pathway is metabolic intermediate biosynthesis; 1-deoxy-D-xylulose 5-phosphate biosynthesis; 1-deoxy-D-xylulose 5-phosphate from D-glyceraldehyde 3-phosphate and pyruvate: step 1/1. Catalyzes the acyloin condensation reaction between C atoms 2 and 3 of pyruvate and glyceraldehyde 3-phosphate to yield 1-deoxy-D-xylulose-5-phosphate (DXP). The sequence is that of 1-deoxy-D-xylulose-5-phosphate synthase from Oleidesulfovibrio alaskensis (strain ATCC BAA-1058 / DSM 17464 / G20) (Desulfovibrio alaskensis).